Consider the following 257-residue polypeptide: Acetylglutamate kinase (257 aa).

Substrate-binding positions include 41 to 42 (GG), Arg63, and Asn158.

It belongs to the acetylglutamate kinase family. ArgB subfamily.

The protein resides in the cytoplasm. The catalysed reaction is N-acetyl-L-glutamate + ATP = N-acetyl-L-glutamyl 5-phosphate + ADP. It participates in amino-acid biosynthesis; L-arginine biosynthesis; N(2)-acetyl-L-ornithine from L-glutamate: step 2/4. In terms of biological role, catalyzes the ATP-dependent phosphorylation of N-acetyl-L-glutamate. This is Acetylglutamate kinase from Phocaeicola vulgatus (strain ATCC 8482 / DSM 1447 / JCM 5826 / CCUG 4940 / NBRC 14291 / NCTC 11154) (Bacteroides vulgatus).